We begin with the raw amino-acid sequence, 488 residues long: Cysteine--tRNA ligase (488 aa).

Zn(2+) is bound at residue Cys-29. Residues 31–41 (ATVQGMPHVGH) carry the 'HIGH' region motif. Residues Cys-227, His-252, and Glu-256 each coordinate Zn(2+). A 'KMSKS' region motif is present at residues 283-287 (KMSKS). Lys-286 provides a ligand contact to ATP.

It belongs to the class-I aminoacyl-tRNA synthetase family. In terms of assembly, monomer. It depends on Zn(2+) as a cofactor.

It localises to the cytoplasm. The catalysed reaction is tRNA(Cys) + L-cysteine + ATP = L-cysteinyl-tRNA(Cys) + AMP + diphosphate. This is Cysteine--tRNA ligase from Pseudarthrobacter chlorophenolicus (strain ATCC 700700 / DSM 12829 / CIP 107037 / JCM 12360 / KCTC 9906 / NCIMB 13794 / A6) (Arthrobacter chlorophenolicus).